The sequence spans 454 residues: MHSTDTIVAQATPPGRGGVGILRVSGPKAAVVAQTILGKVPKPRYADYLPFRNEDNSVLDQGIALFFPNPNSFTGEDVLELQGHGGPIILDLLLKRILQIPGIRIAKPGEFSERAFLNDKLDLAQAEAIADLIDASSEQAARSAINSLQGAFSSHINEMVESLTNLRIYVEAAIDFPDEEIDFLSDGVIEGKLNTVISQLDDVRTQARQGSLLREGMKVVIAGRPNAGKSSLLNALAGREAAIVTDIAGTTRDVLREHIHIDGMPLHIIDTAGLREASDEVERIGIERAWQEIEQADRVLFMVDSTTTEATTPEEIWPEFMARLPSTLPVTVIRNKSDLTGEPAEITSQGDYPMIRLSARDGMGIELLRSHLKEAMGFNSNTEGGFLARRRHLQALNTAAEHLQQGYQQLVYAKSGELLAEELRLAQQALSEITGEFTSDDLLGRIFSSFCIGK.

(6S)-5-formyl-5,6,7,8-tetrahydrofolate is bound by residues Arg-23, Glu-80, and Lys-120. In terms of domain architecture, TrmE-type G spans 216 to 377 (GMKVVIAGRP…LRSHLKEAMG (162 aa)). Asn-226 contributes to the K(+) binding site. GTP is bound by residues 226-231 (NAGKSS), 245-251 (TDIAGTT), 270-273 (DTAG), and 358-360 (SAR). A Mg(2+)-binding site is contributed by Ser-230. The K(+) site is built by Thr-245, Ile-247, and Thr-250. Thr-251 contacts Mg(2+). Residue Lys-454 participates in (6S)-5-formyl-5,6,7,8-tetrahydrofolate binding.

This sequence belongs to the TRAFAC class TrmE-Era-EngA-EngB-Septin-like GTPase superfamily. TrmE GTPase family. In terms of assembly, homodimer. Heterotetramer of two MnmE and two MnmG subunits. Requires K(+) as cofactor.

The protein resides in the cytoplasm. Its function is as follows. Exhibits a very high intrinsic GTPase hydrolysis rate. Involved in the addition of a carboxymethylaminomethyl (cmnm) group at the wobble position (U34) of certain tRNAs, forming tRNA-cmnm(5)s(2)U34. In Proteus mirabilis (strain HI4320), this protein is tRNA modification GTPase MnmE.